Consider the following 170-residue polypeptide: Bifunctional protein PyrR (170 aa).

The short motif at 90-102 (LVLIDDVLMSGRT) is the PRPP-binding element.

This sequence belongs to the purine/pyrimidine phosphoribosyltransferase family. PyrR subfamily.

It catalyses the reaction UMP + diphosphate = 5-phospho-alpha-D-ribose 1-diphosphate + uracil. Regulates the transcription of the pyrimidine nucleotide (pyr) operon in response to exogenous pyrimidines. In terms of biological role, also displays a weak uracil phosphoribosyltransferase activity which is not physiologically significant. This chain is Bifunctional protein PyrR, found in Pseudomonas syringae pv. syringae (strain B728a).